Reading from the N-terminus, the 200-residue chain is HTH-type transcriptional repressor KstR2 (200 aa).

The region spanning 9–69 (NSRRGELLEL…ELLRGFLDWL (61 aa)) is the HTH tetR-type domain. Residues 32 to 51 (TVRDIADGAGILSGSLYHHF) constitute a DNA-binding region (H-T-H motif).

Homodimer.

In terms of biological role, controls the expression of a small regulon that may play a role in the utilization of cholesterol. This is HTH-type transcriptional repressor KstR2 (kstR2) from Mycobacterium tuberculosis (strain CDC 1551 / Oshkosh).